We begin with the raw amino-acid sequence, 443 residues long: Serine/threonine-protein phosphatase 2A 55 kDa regulatory subunit B beta isoform (443 aa).

WD repeat units lie at residues Thr22–Val61, Glu87–Glu128, Ala171–Asn209, and Glu220–Gly260. Position 275 is a phosphoserine (Ser275). WD repeat units lie at residues Lys279–Glu317, Glu334–Leu375, and Asp410–Val442. Phosphothreonine is present on Thr298.

This sequence belongs to the phosphatase 2A regulatory subunit B family. PP2A consists of a common heterodimeric core enzyme, composed of a 36 kDa catalytic subunit (subunit C) and a 65 kDa constant regulatory subunit (PR65 or subunit A), that associates with a variety of regulatory subunits. Proteins that associate with the core dimer include three families of regulatory subunits B (the R2/B/PR55/B55, R3/B''/PR72/PR130/PR59 and R5/B'/B56 families), the 48 kDa variable regulatory subunit, viral proteins, and cell signaling molecules. Interacts with TOMM22. Interacts with IER5 (via N- and C-terminal regions). In terms of tissue distribution, brain.

The protein localises to the cytoplasm. Its subcellular location is the cytoskeleton. It is found in the membrane. The B regulatory subunit might modulate substrate selectivity and catalytic activity, and might also direct the localization of the catalytic enzyme to a particular subcellular compartment. The chain is Serine/threonine-protein phosphatase 2A 55 kDa regulatory subunit B beta isoform (PPP2R2B) from Sus scrofa (Pig).